The primary structure comprises 395 residues: [LysW]-aminoadipate semialdehyde transaminase (395 aa).

Residues 113 to 114 (GT) and phenylalanine 140 contribute to the pyridoxal 5'-phosphate site. Arginine 143 lines the substrate pocket. Residue 225 to 228 (DEIQ) participates in pyridoxal 5'-phosphate binding. Lysine 254 carries the post-translational modification N6-(pyridoxal phosphate)lysine. Threonine 282 is a binding site for substrate. Threonine 283 is a pyridoxal 5'-phosphate binding site.

It belongs to the class-III pyridoxal-phosphate-dependent aminotransferase family. LysJ subfamily. As to quaternary structure, homodimer. The cofactor is pyridoxal 5'-phosphate.

The protein localises to the cytoplasm. The enzyme catalyses [amino-group carrier protein]-C-terminal-gamma-(L-lysyl)-L-glutamate + 2-oxoglutarate = [amino-group carrier protein]-C-terminal-N-(1-carboxy-5-oxopentan-1-yl)-L-glutamine + L-glutamate. It functions in the pathway amino-acid biosynthesis; L-lysine biosynthesis via AAA pathway; L-lysine from L-alpha-aminoadipate (Thermus route): step 4/5. Functionally, catalyzes the transfer of the amino group of L-glutamate to [LysW]-aminoadipate 6-semialdehyde, generating [LysW]-gamma-L-lysine. This Thermus thermophilus (strain ATCC 27634 / DSM 579 / HB8) protein is [LysW]-aminoadipate semialdehyde transaminase.